We begin with the raw amino-acid sequence, 488 residues long: Glutamyl-tRNA(Gln) amidotransferase subunit A (488 aa).

Active-site charge relay system residues include Lys77 and Ser152. Ser176 acts as the Acyl-ester intermediate in catalysis.

The protein belongs to the amidase family. GatA subfamily. Heterotrimer of A, B and C subunits.

The catalysed reaction is L-glutamyl-tRNA(Gln) + L-glutamine + ATP + H2O = L-glutaminyl-tRNA(Gln) + L-glutamate + ADP + phosphate + H(+). Allows the formation of correctly charged Gln-tRNA(Gln) through the transamidation of misacylated Glu-tRNA(Gln) in organisms which lack glutaminyl-tRNA synthetase. The reaction takes place in the presence of glutamine and ATP through an activated gamma-phospho-Glu-tRNA(Gln). This Streptococcus sanguinis (strain SK36) protein is Glutamyl-tRNA(Gln) amidotransferase subunit A.